The primary structure comprises 558 residues: Dihydroxy-acid dehydratase (558 aa).

D78 contacts Mg(2+). Residue C119 participates in [2Fe-2S] cluster binding. Residues D120 and K121 each contribute to the Mg(2+) site. N6-carboxylysine is present on K121. C192 serves as a coordination point for [2Fe-2S] cluster. E446 provides a ligand contact to Mg(2+). The active-site Proton acceptor is the S472.

The protein belongs to the IlvD/Edd family. As to quaternary structure, homodimer. [2Fe-2S] cluster is required as a cofactor. Mg(2+) serves as cofactor.

It carries out the reaction (2R)-2,3-dihydroxy-3-methylbutanoate = 3-methyl-2-oxobutanoate + H2O. It catalyses the reaction (2R,3R)-2,3-dihydroxy-3-methylpentanoate = (S)-3-methyl-2-oxopentanoate + H2O. The protein operates within amino-acid biosynthesis; L-isoleucine biosynthesis; L-isoleucine from 2-oxobutanoate: step 3/4. It participates in amino-acid biosynthesis; L-valine biosynthesis; L-valine from pyruvate: step 3/4. In terms of biological role, functions in the biosynthesis of branched-chain amino acids. Catalyzes the dehydration of (2R,3R)-2,3-dihydroxy-3-methylpentanoate (2,3-dihydroxy-3-methylvalerate) into 2-oxo-3-methylpentanoate (2-oxo-3-methylvalerate) and of (2R)-2,3-dihydroxy-3-methylbutanoate (2,3-dihydroxyisovalerate) into 2-oxo-3-methylbutanoate (2-oxoisovalerate), the penultimate precursor to L-isoleucine and L-valine, respectively. The protein is Dihydroxy-acid dehydratase of Campylobacter lari (strain RM2100 / D67 / ATCC BAA-1060).